The sequence spans 253 residues: Testis-expressed protein 47 (253 aa).

Testis-specific.

In Homo sapiens (Human), this protein is Testis-expressed protein 47.